The chain runs to 617 residues: MDLKTAVFNAARDGKLRLLTKLLASKSKAEVSSLISEKTNGATPLLMAARYGHLDMVEFLLEQCSASIEVGGSVNFDGETIEGAPPLWAASAAGHLKVVQSLLNHGASVNNTTLTNSTPLRAACFDGHLEIVKYLVEHKADLEVSNRHGHTCLMISCYKGHKEIAQYLLEKGADVNRKSVKGNTALHDCAESGSLDIMKMLLMYCAKMEKDGYGMTPLLSASVTGHTNIVDFLTHHAQTSKTERINALELLGATFVDKKRDLLGALKYWKKAMNMRYSDRTNIISKPVPQTLIMAYDYAKEVNSAEELEGLIADPDEMRMQALLIRERILGPSHPDTSYYIRYRGAVYADSGNFKRCINLWKYALDMQQSNLDPLSPMTASSLLSFAELFSFMLQDRAKGLLGTTVTFDDLMGILCKSVLEIERAIKQTQCPADPLQLNKALSIILHLICLLEKVPCTVEQDHFKKQTIYRFLKLHPRGKNNFSPLHLAVDKNTTCVGRYPVCKFPSLQVTAILIECGADVNVRDSDDNSPLHIAALNNHPDIMNLLIKSGAHFDATNLHKQTASDLLDEKEIAKNLIQPINHTTLQCLAARVIVNHRIYYKGNIPEKLETFVSLHR.

Met1 carries the post-translational modification N-acetylmethionine. ANK repeat units follow at residues 2-31, 40-70, 82-111, 115-144, 148-177, 181-210, and 213-242; these read DLKT…KAEV, NGAT…SIEV, EGAP…SVNN, TNST…DLEV, HGHT…DVNR, KGNT…KMEK, and YGMT…TSKT. TPR repeat units follow at residues 245 to 279 and 338 to 371; these read INAL…RYSD and SYYI…QQSN. ANK repeat units follow at residues 481 to 523 and 527 to 556; these read NNFS…DVNV and DDNS…HFDA.

Belongs to the fem-1 family. In terms of assembly, component of a Cul2-RING (CRL2) E3 ubiquitin-protein ligase complex, also named ECS (Elongin BC-CUL2/5-SOCS-box protein) complex, composed of CUL2, Elongin BC (ELOB and ELOC), RBX1 and substrate-specific adapter FEM1C. In terms of tissue distribution, widely expressed. Expressed at higher level in testis.

It functions in the pathway protein modification; protein ubiquitination. Functionally, substrate-recognition component of a Cul2-RING (CRL2) E3 ubiquitin-protein ligase complex of the DesCEND (destruction via C-end degrons) pathway, which recognizes a C-degron located at the extreme C terminus of target proteins, leading to their ubiquitination and degradation. The C-degron recognized by the DesCEND pathway is usually a motif of less than ten residues and can be present in full-length proteins, truncated proteins or proteolytically cleaved forms. The CRL2(FEM1C) complex specifically recognizes proteins with an arginine at the C-terminus: recognizes and binds proteins ending with -Lys/Arg-Xaa-Arg and -Lys/Arg-Xaa-Xaa-Arg C-degrons, such as SIL1 or OR51B2, leading to their ubiquitination and degradation. The CRL2(FEM1C) complex mediates ubiquitination and degradation of truncated MSRB1/SEPX1 selenoproteins produced by failed UGA/Sec decoding. Promotes ubiquitination and degradation of SLBP. The chain is Protein fem-1 homolog C from Mus musculus (Mouse).